Reading from the N-terminus, the 171-residue chain is Co-chaperone protein HscB (171 aa).

The region spanning 2-74 (DYFTLFGLPA…LTRAEYLLSL (73 aa)) is the J domain.

Belongs to the HscB family. In terms of assembly, interacts with HscA and stimulates its ATPase activity. Interacts with IscU.

Co-chaperone involved in the maturation of iron-sulfur cluster-containing proteins. Seems to help targeting proteins to be folded toward HscA. In Salmonella agona (strain SL483), this protein is Co-chaperone protein HscB.